A 348-amino-acid polypeptide reads, in one-letter code: Phosphoribosylformylglycinamidine cyclo-ligase (348 aa).

The protein belongs to the AIR synthase family.

The protein localises to the cytoplasm. The enzyme catalyses 2-formamido-N(1)-(5-O-phospho-beta-D-ribosyl)acetamidine + ATP = 5-amino-1-(5-phospho-beta-D-ribosyl)imidazole + ADP + phosphate + H(+). It functions in the pathway purine metabolism; IMP biosynthesis via de novo pathway; 5-amino-1-(5-phospho-D-ribosyl)imidazole from N(2)-formyl-N(1)-(5-phospho-D-ribosyl)glycinamide: step 2/2. The polypeptide is Phosphoribosylformylglycinamidine cyclo-ligase (Ruegeria sp. (strain TM1040) (Silicibacter sp.)).